The primary structure comprises 138 residues: uncharacterized protein (138 aa).

Residues 74 to 96 (RRRSPSLPARRPPTPREDALEDY) are disordered. Over residues 87–96 (TPREDALEDY) the composition is skewed to basic and acidic residues.

This is an uncharacterized protein from Orgyia pseudotsugata (Douglas-fir tussock moth).